Consider the following 536-residue polypeptide: DEAD-box ATP-dependent RNA helicase 41 (536 aa).

Basic and acidic residues predominate over residues 1 to 10 (MEQEENHSAD). Residues 1–25 (MEQEENHSADHLSAQPGNGNELEES) are disordered. The segment at 40-69 (GEPRCVICGRYGEYICDQTDDDICSVECKT) adopts an HIT-type zinc-finger fold. Residues 137–165 (MCFSSSGLPEKLVLNLEAAGYVMPTPVQM) carry the Q motif motif. Residues 168 to 344 (IPSSICNRSL…NSLAKNAIHI (177 aa)) form the Helicase ATP-binding domain. 181–188 (ADTGSGKT) provides a ligand contact to ATP. Positions 293 to 296 (DEVD) match the DEAD box motif. In terms of domain architecture, Helicase C-terminal spans 355–518 (SVKQVVIWVE…PIPRELANSK (164 aa)).

It belongs to the DEAD box helicase family. DDX59 subfamily.

The enzyme catalyses ATP + H2O = ADP + phosphate + H(+). This is DEAD-box ATP-dependent RNA helicase 41 from Oryza sativa subsp. japonica (Rice).